We begin with the raw amino-acid sequence, 590 residues long: Aspartate--tRNA(Asp/Asn) ligase (590 aa).

E170 contacts L-aspartate. The aspartate stretch occupies residues 194 to 197; it reads QLFK. R216 is a binding site for L-aspartate. ATP is bound by residues 216–218 and Q225; that span reads RDE. Position 448 (H448) interacts with L-aspartate. Residue E482 participates in ATP binding. R489 lines the L-aspartate pocket. 534-537 contacts ATP; that stretch reads GWDR. The disordered stretch occupies residues 557–590; it reads SGGGADPLTGAPAPITPQQRRESGIDAKPKKDGE. Positions 575–590 are enriched in basic and acidic residues; sequence QRRESGIDAKPKKDGE.

Belongs to the class-II aminoacyl-tRNA synthetase family. Type 1 subfamily. As to quaternary structure, homodimer.

Its subcellular location is the cytoplasm. It catalyses the reaction tRNA(Asx) + L-aspartate + ATP = L-aspartyl-tRNA(Asx) + AMP + diphosphate. Its function is as follows. Aspartyl-tRNA synthetase with relaxed tRNA specificity since it is able to aspartylate not only its cognate tRNA(Asp) but also tRNA(Asn). Reaction proceeds in two steps: L-aspartate is first activated by ATP to form Asp-AMP and then transferred to the acceptor end of tRNA(Asp/Asn). This chain is Aspartate--tRNA(Asp/Asn) ligase, found in Mycobacterium sp. (strain KMS).